We begin with the raw amino-acid sequence, 256 residues long: MAPGKKVAPAPFGAKSTKSNKTRNPLTHSTPKNFGIGQAVQPKRNLSRYVKWPEYVRVQRQKKILSIRLKVPPTIAQFQYTLDRNTAAETFKLFNKYRPETAAEKKERLTKEAAAVAEGKSKQDASPKPYAVKYGLNHVVALIENKKAKLVLIANDVDPIELVVFLPALCKKMGVPYAIVKGKARLGTLVNQKTSAVAALTEVRAEDEAALAKLVSTIDANFADKYDEVKKHWGGGILGNKAQAKMDKRAKNSDSA.

The interval 1–37 (MAPGKKVAPAPFGAKSTKSNKTRNPLTHSTPKNFGIG) is disordered. The segment covering 16–32 (STKSNKTRNPLTHSTPK) has biased composition (polar residues).

It belongs to the eukaryotic ribosomal protein eL8 family. In terms of assembly, component of the large ribosomal subunit (LSU). Mature yeast ribosomes consist of a small (40S) and a large (60S) subunit. The 40S small subunit contains 1 molecule of ribosomal RNA (18S rRNA) and 33 different proteins (encoded by 57 genes). The large 60S subunit contains 3 rRNA molecules (25S, 5.8S and 5S rRNA) and 46 different proteins (encoded by 81 genes).

The protein localises to the cytoplasm. Functionally, component of the ribosome, a large ribonucleoprotein complex responsible for the synthesis of proteins in the cell. The small ribosomal subunit (SSU) binds messenger RNAs (mRNAs) and translates the encoded message by selecting cognate aminoacyl-transfer RNA (tRNA) molecules. The large subunit (LSU) contains the ribosomal catalytic site termed the peptidyl transferase center (PTC), which catalyzes the formation of peptide bonds, thereby polymerizing the amino acids delivered by tRNAs into a polypeptide chain. The nascent polypeptides leave the ribosome through a tunnel in the LSU and interact with protein factors that function in enzymatic processing, targeting, and the membrane insertion of nascent chains at the exit of the ribosomal tunnel. The polypeptide is Large ribosomal subunit protein eL8A (Saccharomyces cerevisiae (strain ATCC 204508 / S288c) (Baker's yeast)).